We begin with the raw amino-acid sequence, 1145 residues long: Trafficking protein particle complex subunit 10 (1145 aa).

This sequence belongs to the TMEM1 family. Part of the multisubunit TRAPP (transport protein particle) complex. Interacts with Shal (via C-terminal dendritic targeting motif). As to expression, co-expressed with Shal in the nervous system.

The protein localises to the golgi apparatus. Its subcellular location is the cis-Golgi network. It is found in the cell projection. It localises to the dendrite. The protein resides in the perikaryon. May play a role in vesicular transport from endoplasmic reticulum to Golgi. Has a role in one of the several mechanisms underlying dendritic localization of Shal channels. In Drosophila melanogaster (Fruit fly), this protein is Trafficking protein particle complex subunit 10 (SIDL).